The following is a 513-amino-acid chain: Zinc finger protein 395 (513 aa).

Positions 17-29 (ARVLGPSASEGPS) are enriched in low complexity. Positions 17–56 (ARVLGPSASEGPSAAPPSEPLLEGAAPQPFTTSDDTPCQE) are disordered. Polar residues predominate over residues 45-55 (PFTTSDDTPCQ). The Nuclear export signal motif lies at 165–174 (MDEMMAAMVL). Residues 204 to 269 (KESGDISDSG…DPFLLDEPAP (66 aa)) form a disordered region. The span at 209 to 229 (ISDSGSSTTSGHWSGSSGVST) shows a compositional bias: low complexity. Phosphoserine is present on Ser-248. The segment at 280–305 (YKCLWPNCGKVLRSIVGIKRHVKALH) adopts a C2H2-type zinc-finger fold. The disordered stretch occupies residues 335 to 394 (AAAAAAAGTPVPGTPTSEPAPTPSMTGLPLSALPPPLHKAQSSGPEHPGPESSLPSGALS). Positions 348 to 359 (TPTSEPAPTPSM) are enriched in polar residues. Residues Ser-376 and Ser-449 each carry the phosphoserine modification. A compositionally biased stretch (low complexity) spans 376–391 (SSGPEHPGPESSLPSG).

As to quaternary structure, interacts with repression-mediating E2 binding site P2 of human papillomavirus type 8 (HPV8). In terms of tissue distribution, widely expressed.

The protein localises to the cytoplasm. Its subcellular location is the nucleus. Functionally, plays a role in papillomavirus genes transcription. This chain is Zinc finger protein 395 (ZNF395), found in Homo sapiens (Human).